A 228-amino-acid polypeptide reads, in one-letter code: PKHD-type hydroxylase XC_1340 (228 aa).

The region spanning 78 to 180 (RIYPPLFNRY…RVASFFWIQS (103 aa)) is the Fe2OG dioxygenase domain. Fe cation contacts are provided by histidine 96, aspartate 98, and histidine 161. Residue arginine 171 coordinates 2-oxoglutarate.

It depends on Fe(2+) as a cofactor. Requires L-ascorbate as cofactor.

The chain is PKHD-type hydroxylase XC_1340 from Xanthomonas campestris pv. campestris (strain 8004).